A 315-amino-acid polypeptide reads, in one-letter code: Carbamate kinase (315 aa).

This sequence belongs to the carbamate kinase family. Homodimer.

It localises to the cytoplasm. It carries out the reaction hydrogencarbonate + NH4(+) + ATP = carbamoyl phosphate + ADP + H2O + H(+). The polypeptide is Carbamate kinase (cpkA) (Thermococcus kodakarensis (strain ATCC BAA-918 / JCM 12380 / KOD1) (Pyrococcus kodakaraensis (strain KOD1))).